We begin with the raw amino-acid sequence, 326 residues long: MSAIRVGIVGYGNLGRGVEFAISQNPDMELVAVFTRRDPSTVSVASNASVYLVDDAEKFQDDIDVMILCGGSATDLPEQGPHFAQWFNTIDSFDTHAKIPEFFDAVDAAAQKSGKVSVISVGWDPGLFSLNRVLGEAVLPVGTTYTFWGDGLSQGHSDAVRRIEGVKNAVQYTLPIKDAVERVRNGENPELTTREKHARECWVVLEEGADAPKVEQEIVTMPNYFDEYNTTVNFISEDEFNANHTGMPHGGFVIRSGESGANDKQILEFSLKLESNPNFTSSVLVAYARAAHRLSQAGEKGAKTVFDIPFGLLSPKSAAQLRKELL.

Residues 11 to 14 (YGNL), 35 to 37 (TRR), 69 to 72 (CGGS), 92 to 94 (SFD), and 121 to 125 (VGWDP) each bind NADP(+). Substrate is bound by residues aspartate 94, aspartate 124, tryptophan 148, 154-155 (QG), threonine 173, arginine 199, histidine 249, and asparagine 276.

This sequence belongs to the diaminopimelate dehydrogenase family. As to quaternary structure, homodimer.

It catalyses the reaction meso-2,6-diaminopimelate + NADP(+) + H2O = (S)-2-amino-6-oxoheptanedioate + NH4(+) + NADPH + H(+). The protein operates within amino-acid biosynthesis; L-lysine biosynthesis via DAP pathway; DL-2,6-diaminopimelate from (S)-tetrahydrodipicolinate: step 1/1. With respect to regulation, l,L-2,6-diaminopimelate, D,D-2,6-diaminopimelate and meso-2,5-diaminoadipate competitively inhibit the oxidation of meso-2,6-diaminopimelate. L-2-amino-6-methylene-pimelate is also a potent competitive inhibitor (5 uM) of this reaction. Glyoxylate inhibits the reductive amination of L-2-amino-6-oxopimelate about 30%. The enzyme is inhibited completely by p-chloromercuribenzoate and HgCl(2) in vitro. Functionally, catalyzes the reversible NADPH-dependent reductive amination of L-2-amino-6-oxopimelate, the acyclic form of L-tetrahydrodipicolinate, to generate the meso compound, D,L-2,6-diaminopimelate. Probably plays a role in lysine biosynthesis. Exhibits a high substrate specificity, since alpha-ketoglutarate, pyruvate, oxaloacetate, glyoxylate, alpha-ketobutyrate, alpha-ketovalerate, alpha-ketocaproate, alpha-ketoisocaproate, alpha-ketoisovalerate, and phenylpyruvate are not substrates for the reductive amination reaction, and L,L-2,6-diaminopimelate, D,D-2,6-diaminopimelate, DL-alpha-aminopimelate, meso- and DL-2,5-diaminoadipate, L-djenkolate, L-cystine, L-lysine, S-(beta-aminoethy1)-L-homocysteine, L-ornithine, L-arginine, L-alpha,gamma-diaminobutyrate, L-histidine, L-phenylalanine, L-tyrosine, L-glutamate, L-aspartate, L-leucine, L-valine, L-methionine, L-serine, L-alanine, L-alpha-aminobutyrate, D-lysine, D-glutamate, D-leucine, D-alanine, D-phenylalanine, epsilon-aminocaproate, 7-aminoheptanoate, and 8-aminooctanoate are not substrates for the oxidative deamination reaction. Cannot use NAD(+) or NAD(+) analogs instead of NADP(+) for the oxidative deamination reaction. The protein is Meso-diaminopimelate D-dehydrogenase (dapdh) of Lysinibacillus sphaericus (Bacillus sphaericus).